The primary structure comprises 198 residues: Glycerol-3-phosphate acyltransferase 3 (198 aa).

4 consecutive transmembrane segments (helical) span residues 4 to 24, 71 to 91, 113 to 133, and 147 to 167; these read TYLLFIVAYLLGSIPFALVVG, LPMVFGLDIHPLWFGLAAVLG, LLCYSPVVFAILAVVFFTLLF, and VVAVIASIVTGDKIFIIAMCL.

Belongs to the PlsY family. As to quaternary structure, probably interacts with PlsX.

It localises to the cell membrane. It carries out the reaction an acyl phosphate + sn-glycerol 3-phosphate = a 1-acyl-sn-glycero-3-phosphate + phosphate. It participates in lipid metabolism; phospholipid metabolism. Functionally, catalyzes the transfer of an acyl group from acyl-phosphate (acyl-PO(4)) to glycerol-3-phosphate (G3P) to form lysophosphatidic acid (LPA). This enzyme utilizes acyl-phosphate as fatty acyl donor, but not acyl-CoA or acyl-ACP. This is Glycerol-3-phosphate acyltransferase 3 from Bacillus anthracis.